A 3133-amino-acid polypeptide reads, in one-letter code: Hemocytin (3133 aa).

One can recognise a TIL 1 domain in the interval Cys-40 to Cys-96. An N-linked (GlcNAc...) asparagine glycan is attached at Asn-151. The 57-residue stretch at Thr-153–Cys-209 folds into the TIL 2 domain. Asn-237 carries N-linked (GlcNAc...) asparagine glycosylation. In terms of domain architecture, VWFD 1 spans Gly-247–Pro-418. 3 cysteine pairs are disulfide-bonded: Cys-249-Cys-380, Cys-271-Cys-417, and Cys-295-Cys-302. The region spanning Cys-509 to Cys-576 is the TIL 3 domain. Asn-564 carries N-linked (GlcNAc...) asparagine glycosylation. Residues Pro-661–Gly-680 are disordered. One can recognise a TIL 4 domain in the interval Cys-770 to Cys-837. Residues Ser-899–Thr-924 form a disordered region. 2 cysteine pairs are disulfide-bonded: Cys-940–Cys-1095 and Cys-1116–Cys-1254. 2 consecutive F5/8 type C domains span residues Cys-940 to Cys-1095 and Cys-1116 to Cys-1254. Residues Asn-1170, Asn-1387, Asn-1622, Asn-1727, and Asn-1847 are each glycosylated (N-linked (GlcNAc...) asparagine). Residues Val-1619–Ala-1794 enclose the VWFD 2 domain. Disulfide bonds link Cys-1621–Cys-1754 and Cys-1641–Cys-1793. In terms of domain architecture, TIL 5 spans Cys-1890–Cys-1948. Positions Cys-1951–Glu-2136 constitute a VWFD 3 domain. 2 disulfide bridges follow: Cys-1953–Cys-2099 and Cys-2001–Cys-2009. N-linked (GlcNAc...) asparagine glycosylation is found at Asn-1975 and Asn-1985. N-linked (GlcNAc...) asparagine glycosylation is found at Asn-2093, Asn-2113, Asn-2161, Asn-2276, and Asn-2451. Positions Cys-2229–Cys-2285 constitute a TIL 6 domain. A VWFC 1 domain is found at Val-2553–Glu-2622. Residues Asn-2647, Asn-2654, Asn-2663, Asn-2794, Asn-2810, Asn-2865, Asn-2929, Asn-2964, and Asn-3028 are each glycosylated (N-linked (GlcNAc...) asparagine). The 66-residue stretch at Val-2842–Val-2907 folds into the VWFC 2 domain. Intrachain disulfides connect Cys-2971/Cys-3040, Cys-2991/Cys-3054, Cys-3004/Cys-3070, and Cys-3020/Cys-3072. The CTCK domain occupies Cys-2971 to Gly-3076.

Post-translationally, may be converted into the 260 kDa mature hemocytin by proteolysis.

Its function is as follows. Adhesive protein and relates to hemostasis or encapsulation of foreign substances for self-defense. The chain is Hemocytin from Bombyx mori (Silk moth).